The primary structure comprises 69 residues: Large ribosomal subunit protein bL31 (69 aa).

It belongs to the bacterial ribosomal protein bL31 family. Type A subfamily. As to quaternary structure, part of the 50S ribosomal subunit.

In terms of biological role, binds the 23S rRNA. The sequence is that of Large ribosomal subunit protein bL31 from Mycoplasmopsis pulmonis (strain UAB CTIP) (Mycoplasma pulmonis).